The following is a 367-amino-acid chain: Endopolygalacturonase B (367 aa).

Positions 1-17 are cleaved as a signal peptide; that stretch reads MHFQLLGLAALGSLAAA. Residues 18 to 30 constitute a propeptide that is removed on maturation; that stretch reads APAPSRTSELVER. Cys34 and Cys49 form a disulfide bridge. PbH1 repeat units follow at residues 161 to 191, 192 to 213, 214 to 234, 243 to 264, and 272 to 294; these read GNDV…DVSE, SNGV…AINS, GENI…SIGS, VKNV…RIKT, and VSGV…VIEQ. The active-site Proton donor is Asp206. Residues Cys208 and Cys224 are joined by a disulfide bond. His228 is a catalytic residue. Residue Asn279 is glycosylated (N-linked (GlcNAc...) asparagine). Cystine bridges form between Cys334–Cys339 and Cys358–Cys367.

This sequence belongs to the glycosyl hydrolase 28 family.

The protein resides in the secreted. The catalysed reaction is (1,4-alpha-D-galacturonosyl)n+m + H2O = (1,4-alpha-D-galacturonosyl)n + (1,4-alpha-D-galacturonosyl)m.. Involved in maceration and soft-rotting of plant tissue. Hydrolyzes the 1,4-alpha glycosidic bonds of de-esterified pectate in the smooth region of the plant cell wall. The polypeptide is Endopolygalacturonase B (pgaB) (Aspergillus flavus (strain ATCC MYA-384 / AF70)).